A 104-amino-acid polypeptide reads, in one-letter code: L-rhamnose mutarotase (104 aa).

Tyrosine 18 lines the substrate pocket. Residue histidine 22 is the Proton donor of the active site. Substrate contacts are provided by residues tyrosine 41 and 76 to 77 (WW).

The protein belongs to the rhamnose mutarotase family. In terms of assembly, homodimer.

It is found in the cytoplasm. The enzyme catalyses alpha-L-rhamnose = beta-L-rhamnose. It participates in carbohydrate metabolism; L-rhamnose metabolism. Its function is as follows. Involved in the anomeric conversion of L-rhamnose. The polypeptide is L-rhamnose mutarotase (Shigella dysenteriae serotype 1 (strain Sd197)).